We begin with the raw amino-acid sequence, 414 residues long: Peptidoglycan beta-N-acetylmuramidase NamZ (414 aa).

The first 23 residues, 1–23, serve as a signal peptide directing secretion; the sequence is MRKTIFAFLTGLMMFGTITAASA.

It belongs to the glycoside hydrolase 171 family. As to quaternary structure, homodimer in solution.

The protein resides in the secreted. It catalyses the reaction Hydrolysis of terminal, non-reducing N-acetylmuramic residues.. Functionally, catalyzes the exo-lytic cleavage of beta-1,4-N-acetylmuramate (beta-1,4-MurNAc) from the non-reducing ends of peptidoglycan chains. Specifically hydrolyzes the natural, peptidoglycan-derived disaccharide MurNAc-GlcNAc and the artificial substrate para-nitrophenyl beta-N-acetylmuramic acid (pNP-MurNAc). Requires a MurNAc entity at the non-reducing end, and cannot cleave GlcNAc-MurNAc. Probably plays a role in cell wall turnover and recycling. This is Peptidoglycan beta-N-acetylmuramidase NamZ from Bacillus subtilis (strain 168).